Here is a 189-residue protein sequence, read N- to C-terminus: Holliday junction branch migration complex subunit RuvA (189 aa).

The interval 1–63 (MIHALNGKVE…DDGISLYGFL (63 aa)) is domain I. The tract at residues 64 to 135 (EVIKLKLFEK…ELKDTIKELD (72 aa)) is domain II. Residues 135 to 139 (DVSIN) form a flexible linker region. Residues 140–189 (EKDRKVLEAIEALVTLGFNRNQAKKAVNKVAAKDDKLDDIIKKALRFLSR) form a domain III region.

This sequence belongs to the RuvA family. Homotetramer. Forms an RuvA(8)-RuvB(12)-Holliday junction (HJ) complex. HJ DNA is sandwiched between 2 RuvA tetramers; dsDNA enters through RuvA and exits via RuvB. An RuvB hexamer assembles on each DNA strand where it exits the tetramer. Each RuvB hexamer is contacted by two RuvA subunits (via domain III) on 2 adjacent RuvB subunits; this complex drives branch migration. In the full resolvosome a probable DNA-RuvA(4)-RuvB(12)-RuvC(2) complex forms which resolves the HJ.

The protein resides in the cytoplasm. In terms of biological role, the RuvA-RuvB-RuvC complex processes Holliday junction (HJ) DNA during genetic recombination and DNA repair, while the RuvA-RuvB complex plays an important role in the rescue of blocked DNA replication forks via replication fork reversal (RFR). RuvA specifically binds to HJ cruciform DNA, conferring on it an open structure. The RuvB hexamer acts as an ATP-dependent pump, pulling dsDNA into and through the RuvAB complex. HJ branch migration allows RuvC to scan DNA until it finds its consensus sequence, where it cleaves and resolves the cruciform DNA. This Thermosipho africanus (strain TCF52B) protein is Holliday junction branch migration complex subunit RuvA.